Consider the following 256-residue polypeptide: Trypsin CFT-1 (256 aa).

The N-terminal stretch at 1–17 (MRVTLALVALCLASVAA) is a signal peptide. Residues 18–24 (LPEKQQR) constitute a propeptide, activation peptide. The 232-residue stretch at 25–256 (IVGGSVTTIE…RFTAWIQANA (232 aa)) folds into the Peptidase S1 domain. A disulfide bridge links Cys55 with Cys71. Catalysis depends on charge relay system residues His70 and Asp115. 2 cysteine pairs are disulfide-bonded: Cys180/Cys197 and Cys209/Cys233. The active-site Charge relay system is Ser213.

It belongs to the peptidase S1 family.

It is found in the secreted. The protein resides in the extracellular space. It catalyses the reaction Preferential cleavage: Arg-|-Xaa, Lys-|-Xaa.. Functionally, responsible for the activation of delta-endotoxin from Bacillus thuringiensis. The chain is Trypsin CFT-1 from Choristoneura fumiferana (Spruce budworm moth).